A 199-amino-acid polypeptide reads, in one-letter code: Adult-specific cuticular protein ACP-22 (199 aa).

A signal peptide spans 1–19 (MRLFIILSVASFGAIGVLS). Positions 63 to 103 (GGGGGGGGEGEEGREHELRGGGLELGGGGGGGGGGGGGGGE) are disordered. Positions 82–102 (GGGLELGGGGGGGGGGGGGGG) are enriched in gly residues. In terms of domain architecture, Chitin-binding type R&amp;R spans 133-199 (HPEYHSDYHV…IARVSYRKHH (67 aa)).

In terms of tissue distribution, epidermal regions synthesizing hard cuticle.

Cuticular proteins play a significant role in determining the physical properties of cuticles. The sequence is that of Adult-specific cuticular protein ACP-22 (ACP22) from Tenebrio molitor (Yellow mealworm beetle).